Here is a 157-residue protein sequence, read N- to C-terminus: 2-C-methyl-D-erythritol 2,4-cyclodiphosphate synthase (157 aa).

2 residues coordinate a divalent metal cation: D8 and H10. Residues 8–10 (DVH) and 34–35 (HS) each bind 4-CDP-2-C-methyl-D-erythritol 2-phosphate. H42 contacts a divalent metal cation. 4-CDP-2-C-methyl-D-erythritol 2-phosphate-binding positions include 56-58 (DIG), 61-65 (FPDTD), 132-135 (TTEE), and F139.

It belongs to the IspF family. As to quaternary structure, homotrimer. A divalent metal cation serves as cofactor.

It catalyses the reaction 4-CDP-2-C-methyl-D-erythritol 2-phosphate = 2-C-methyl-D-erythritol 2,4-cyclic diphosphate + CMP. Its pathway is isoprenoid biosynthesis; isopentenyl diphosphate biosynthesis via DXP pathway; isopentenyl diphosphate from 1-deoxy-D-xylulose 5-phosphate: step 4/6. Its function is as follows. Involved in the biosynthesis of isopentenyl diphosphate (IPP) and dimethylallyl diphosphate (DMAPP), two major building blocks of isoprenoid compounds. Catalyzes the conversion of 4-diphosphocytidyl-2-C-methyl-D-erythritol 2-phosphate (CDP-ME2P) to 2-C-methyl-D-erythritol 2,4-cyclodiphosphate (ME-CPP) with a corresponding release of cytidine 5-monophosphate (CMP). The sequence is that of 2-C-methyl-D-erythritol 2,4-cyclodiphosphate synthase from Clostridium botulinum (strain Eklund 17B / Type B).